Reading from the N-terminus, the 146-residue chain is Leghemoglobin 1 (146 aa).

The region spanning 2 to 146 (GFTAQQDALV…LAAAIKKAMS (145 aa)) is the Globin domain. Ser13 and Ser14 each carry phosphoserine; by CCAMK. Tyr30 carries the nitrated tyrosine modification. Phosphoserine; by CCAMK occurs at positions 45 and 55. Residue Ser45 participates in heme b binding. His61 is an O2 binding site. Residues Lys64, His93, and Lys96 each contribute to the heme b site. Ser123 carries the phosphoserine; by CCAMK modification. Tyr134 bears the Nitrated tyrosine mark.

Belongs to the plant globin family. In terms of assembly, monomer. Nitrated in effective nodules and particularly in hypoxic conditions; this mechanism may play a protective role in the symbiosis by buffering toxic peroxynitrite NO(2)(-). Nitration level decrease during nodule senescence. In terms of processing, phosphorylated by CCAMK at serine residues in a Ca(2+)-dependent manner; the phosphorylation at Ser-45 disrupts the molecular environment of its porphyrin ring oxygen binding pocket, thus leading to a reduced oxygen consumption and to the delivery of oxygen O(2) to symbiosomes. In terms of tissue distribution, specifically and strongly expressed in root nodules and at low levels in seedlings.

The protein resides in the cytoplasm. The protein localises to the cytosol. Its subcellular location is the nucleus. Functionally, leghemoglobin that reversibly binds oxygen O(2) through a pentacoordinated heme iron. In root nodules, facilitates the diffusion of oxygen to the bacteroids while preventing the bacterial nitrogenase from being inactivated by buffering dioxygen, nitric oxide and carbon monoxide, and promoting the formation of reactive oxygen species (ROS, e.g. H(2)O(2)). This role is essential for symbiotic nitrogen fixation (SNF). The sequence is that of Leghemoglobin 1 from Lotus japonicus (Lotus corniculatus var. japonicus).